The following is a 388-amino-acid chain: Chorismate synthase (388 aa).

2 residues coordinate NADP(+): R39 and R45. FMN is bound by residues 130–132, 251–252, G296, 311–315, and R337; these read RSS, NA, and KPIPT.

The protein belongs to the chorismate synthase family. In terms of assembly, homotetramer. FMNH2 serves as cofactor.

The enzyme catalyses 5-O-(1-carboxyvinyl)-3-phosphoshikimate = chorismate + phosphate. It functions in the pathway metabolic intermediate biosynthesis; chorismate biosynthesis; chorismate from D-erythrose 4-phosphate and phosphoenolpyruvate: step 7/7. In terms of biological role, catalyzes the anti-1,4-elimination of the C-3 phosphate and the C-6 proR hydrogen from 5-enolpyruvylshikimate-3-phosphate (EPSP) to yield chorismate, which is the branch point compound that serves as the starting substrate for the three terminal pathways of aromatic amino acid biosynthesis. This reaction introduces a second double bond into the aromatic ring system. In Streptococcus pyogenes serotype M6 (strain ATCC BAA-946 / MGAS10394), this protein is Chorismate synthase.